The chain runs to 198 residues: Small ribosomal subunit protein uS7 (198 aa).

It belongs to the universal ribosomal protein uS7 family. Part of the 30S ribosomal subunit.

In terms of biological role, one of the primary rRNA binding proteins, it binds directly to 16S rRNA where it nucleates assembly of the head domain of the 30S subunit. Is located at the subunit interface close to the decoding center. This Nanoarchaeum equitans (strain Kin4-M) protein is Small ribosomal subunit protein uS7.